The following is a 348-amino-acid chain: A-kinase anchor protein 7 isoform gamma (348 aa).

Residues 1–25 are disordered; sequence MERPEAGGINSNECENVSRKKKMSE. AMP is bound by residues threonine 129 and 219–221; that span reads HLT. Residues threonine 129 and 219-221 contribute to the CMP site; that span reads HLT. The PKA-RII-alpha subunit binding domain stretch occupies residues 294 to 348; the sequence is AELVRLSKRLVENAVLKAVQQYLEETQNKNKPGEGSSVKTEAADQNGNDNENNRK. The tract at residues 295-319 is RI-alpha-binding; that stretch reads ELVRLSKRLVENAVLKAVQQYLEET. Residues 296-309 form an RII-binding region; that stretch reads LVRLSKRLVENAVL. The segment at 316–348 is disordered; it reads LEETQNKNKPGEGSSVKTEAADQNGNDNENNRK. Over residues 330-348 the composition is skewed to polar residues; sequence SVKTEAADQNGNDNENNRK.

As to quaternary structure, binds cAMP-dependent protein kinase (PKA). Interacts with PRKCA; only the cytoplasmic form is capable of interacting with PRKCA. As to expression, expressed in brain, heart, lung, pancreas and placenta.

The protein localises to the nucleus. It localises to the cytoplasm. Its function is as follows. Probably targets cAMP-dependent protein kinase (PKA) to the cellular membrane or cytoskeletal structures. The membrane-associated form reduces epithelial sodium channel (ENaC) activity, whereas the free cytoplasmic form may negatively regulate ENaC channel feedback inhibition by intracellular sodium. The sequence is that of A-kinase anchor protein 7 isoform gamma (AKAP7) from Homo sapiens (Human).